Consider the following 161-residue polypeptide: Nucleotide-binding protein NE2248 (161 aa).

Belongs to the YajQ family.

In terms of biological role, nucleotide-binding protein. The protein is Nucleotide-binding protein NE2248 of Nitrosomonas europaea (strain ATCC 19718 / CIP 103999 / KCTC 2705 / NBRC 14298).